A 358-amino-acid polypeptide reads, in one-letter code: Methylthioribose-1-phosphate isomerase (358 aa).

Substrate is bound by residues 54–56 (RGA), arginine 96, and glutamine 205. Aspartate 246 (proton donor) is an active-site residue. Residue 256-257 (NK) coordinates substrate.

The protein belongs to the eIF-2B alpha/beta/delta subunits family. MtnA subfamily.

The catalysed reaction is 5-(methylsulfanyl)-alpha-D-ribose 1-phosphate = 5-(methylsulfanyl)-D-ribulose 1-phosphate. It functions in the pathway amino-acid biosynthesis; L-methionine biosynthesis via salvage pathway; L-methionine from S-methyl-5-thio-alpha-D-ribose 1-phosphate: step 1/6. In terms of biological role, catalyzes the interconversion of methylthioribose-1-phosphate (MTR-1-P) into methylthioribulose-1-phosphate (MTRu-1-P). The polypeptide is Methylthioribose-1-phosphate isomerase (Stutzerimonas stutzeri (strain A1501) (Pseudomonas stutzeri)).